Consider the following 654-residue polypeptide: WD repeat-containing protein 70 (654 aa).

Disordered regions lie at residues 1-26 (MERS…VTMG) and 43-175 (FEQT…DSHE). Basic and acidic residues predominate over residues 45–78 (QTRRTAVERSRKTLEAREKEEEMNREKELRRQNE). Residues 99 to 111 (RDTSSSESEQSSD) show a composition bias toward low complexity. Over residues 147-164 (NEEEEEAEEEEEEEEEEE) the composition is skewed to acidic residues. Residues 165 to 175 (NPVHKIPDSHE) show a composition bias toward basic and acidic residues. WD repeat units lie at residues 180 to 219 (HGTK…ASFK), 227 to 268 (CECH…ECIK), 281 to 321 (GHTA…KQKS), 330 to 369 (GKKV…HPKF), 376 to 415 (DSGT…KPLF), 421 to 466 (PTMF…RVYE), and 469 to 508 (ITDA…QRGA). A Glycyl lysine isopeptide (Lys-Gly) (interchain with G-Cter in SUMO2) cross-link involves residue Lys-296. Position 452 is an N6-acetyllysine (Lys-452). Positions 540–565 (REPRQRSTRKQLEKDRLDPLKSHKPE) are enriched in basic and acidic residues. A disordered region spans residues 540-579 (REPRQRSTRKQLEKDRLDPLKSHKPEPPVAGPGRGGRVGT). Residue Thr-579 is modified to Phosphothreonine. Glycyl lysine isopeptide (Lys-Gly) (interchain with G-Cter in SUMO2) cross-links involve residues Lys-590 and Lys-596. 2 positions are modified to phosphoserine: Ser-621 and Ser-638. A disordered region spans residues 630–654 (KTMFAQVESDDEEAKNEPEWKKRKI). Positions 644 to 654 (KNEPEWKKRKI) are enriched in basic and acidic residues.

It belongs to the WD repeat GAD-1 family.

The sequence is that of WD repeat-containing protein 70 (WDR70) from Homo sapiens (Human).